Consider the following 254-residue polypeptide: Phosphoribosylaminoimidazole-succinocarboxamide synthase (254 aa).

The protein belongs to the SAICAR synthetase family.

It catalyses the reaction 5-amino-1-(5-phospho-D-ribosyl)imidazole-4-carboxylate + L-aspartate + ATP = (2S)-2-[5-amino-1-(5-phospho-beta-D-ribosyl)imidazole-4-carboxamido]succinate + ADP + phosphate + 2 H(+). It functions in the pathway purine metabolism; IMP biosynthesis via de novo pathway; 5-amino-1-(5-phospho-D-ribosyl)imidazole-4-carboxamide from 5-amino-1-(5-phospho-D-ribosyl)imidazole-4-carboxylate: step 1/2. This is Phosphoribosylaminoimidazole-succinocarboxamide synthase from Sinorhizobium fredii (strain NBRC 101917 / NGR234).